The chain runs to 654 residues: GTP-binding protein 1 (654 aa).

Positions 1 to 16 are enriched in polar residues; sequence MASLASSQTEPNTSES. A disordered region spans residues 1–44; that stretch reads MASLASSQTEPNTSESPVPASMFSPEPDGEDSDCSLDGEPLRNG. Positions 27–36 are enriched in acidic residues; sequence PDGEDSDCSL. One can recognise a tr-type G domain in the interval 147–377; that stretch reads FLEVRVAVVG…FLNLLSPRSS (231 aa). The G1 stretch occupies residues 156-163; it reads GNVDAGKS. 156 to 163 serves as a coordination point for GTP; that stretch reads GNVDAGKS. The G2 stretch occupies residues 195-199; sequence GRTSS. The segment at 241–244 is G3; it reads DLAG. GTP is bound by residues 241–245 and 297–300; these read DLAGH and TKID. The interval 297 to 300 is G4; the sequence is TKID. The tract at residues 355-357 is G5; it reads SNV. Polar residues predominate over residues 566 to 585; that stretch reads TNNLPMNSKPPQQVKMQSTK. The tract at residues 566 to 654 is disordered; the sequence is TNNLPMNSKP…GACTASTGGC (89 aa). Residues 609–620 show a composition bias toward low complexity; that stretch reads AAAIGVTAGAGA. The segment covering 631 to 642 has biased composition (basic residues); it reads GRRRGGQRHKVK.

It belongs to the TRAFAC class translation factor GTPase superfamily. Classic translation factor GTPase family. GTPBP1 subfamily.

The protein resides in the cytoplasm. Promotes degradation of target mRNA species. Plays a role in the regulation of circadian mRNA stability. Binds GTP and has GTPase activity. The protein is GTP-binding protein 1 (gtpbp1) of Xenopus laevis (African clawed frog).